A 379-amino-acid polypeptide reads, in one-letter code: F-box protein At1g30200 (379 aa).

The F-box domain maps to Asp-24–Asp-72.

This Arabidopsis thaliana (Mouse-ear cress) protein is F-box protein At1g30200.